A 169-amino-acid polypeptide reads, in one-letter code: Peptide deformylase (169 aa).

Fe cation contacts are provided by Cys91 and His133. Glu134 is a catalytic residue. His137 contacts Fe cation.

The protein belongs to the polypeptide deformylase family. It depends on Fe(2+) as a cofactor.

It catalyses the reaction N-terminal N-formyl-L-methionyl-[peptide] + H2O = N-terminal L-methionyl-[peptide] + formate. Its function is as follows. Removes the formyl group from the N-terminal Met of newly synthesized proteins. Requires at least a dipeptide for an efficient rate of reaction. N-terminal L-methionine is a prerequisite for activity but the enzyme has broad specificity at other positions. The chain is Peptide deformylase from Haemophilus influenzae (strain ATCC 51907 / DSM 11121 / KW20 / Rd).